We begin with the raw amino-acid sequence, 1193 residues long: Dynamin-like protein A (1193 aa).

The interval 1–609 (MTDQNRKELL…AFRERVKRLE (609 aa)) is D1, associates with and fuses membranes, tethers lipsomes. A G1 motif D1 region spans residues 50–57 (GHYSAGKS). The segment at 76–78 (TSA) is G2 motif D1. Positions 141 to 144 (DTPG) are G3 motif D1. A G4 motif D1 region spans residues 199–202 (NQID). Residues 561-1193 (MPKSEIKMEQ…WKNSDNTIKM (633 aa)) form a D2, does not associate with membranes region. Residues 619 to 626 (GGFSSGKS) form a G1 motif D2 region. The interval 645 to 647 (TTA) is G2 motif D2. Residues 774 to 777 (DTPG) are G3 motif D2. Positions 837–840 (NAAD) are G4 motif D2.

It belongs to the TRAFAC class dynamin-like GTPase superfamily. Dynamin/Fzo/YdjA family. In terms of assembly, homodimer in solution. Both D1 and D2 domains interact with YwpG, YneK interacts only with D1 while RNase Y (rny) only interacts with whole protein. Probably oligomerizes at damaged membrane sites. Requires Mg(2+) as cofactor.

Its subcellular location is the cell membrane. It catalyses the reaction GTP + H2O = GDP + phosphate + H(+). Mediates lipid mixing of vesicles and full mixing of their contents in the absence and presence of GTP. Tethers and mixes small vesicles better than larger ones, indicating a curvature preference. GTP slows down DynA-mediated lipid fusion, perhaps controlling its activity. Prefers phospholipid composition close to the B.subtilis membrane; requires phosphatidylglycerol for fusion has no activity on pure phosphatidylethanolamine vesicles. Regulates membrane lipid diffusion. Required to prevent membrane damage when exposed to low levels of membrane-damaging antibiotics or to bacteriophage. Probably surveys the cell membrane for stress; localizes to sites of membrane damage (treatment with nisin) and forms foci in cells treated with pore-forming compounds (CCCP). May assist membrane repair, possibly by membrane tethering and fusion. Probably functions both in early and late cell division, affects the proper formation of the FtsZ ring. Plays a non-redundant role with flottilin (floT) in membrane dynamics and cell shape. Probably able to bend membranes. Tethers liposomes and mediates their fusion; this does not require GTPase activity or the presence of GTP. Both GTPase domains (dynamin-type G) are required for GTPase activity. Its function is as follows. Has intrinsic affinity for membranes and membrane distortion capability; causes tubulation and membrane distortion when expressed in a Drosophila cell line. In Bacillus subtilis (strain 168), this protein is Dynamin-like protein A.